We begin with the raw amino-acid sequence, 107 residues long: Acidic phospholipase A2 2 (107 aa).

6 disulfide bridges follow: C26/C100, C28/C38, C37/C82, C43/C107, C44/C75, and C62/C73. The Ca(2+) site is built by Y27, G29, and G31. The active site involves H41. D42 contacts Ca(2+). The active site involves D76.

Ca(2+) is required as a cofactor. Expressed by the venom gland.

It localises to the secreted. The catalysed reaction is a 1,2-diacyl-sn-glycero-3-phosphocholine + H2O = a 1-acyl-sn-glycero-3-phosphocholine + a fatty acid + H(+). Its function is as follows. PLA2 catalyzes the calcium-dependent hydrolysis of the 2-acyl groups in 3-sn-phosphoglycerides. This Bothrops insularis (Golden lancehead) protein is Acidic phospholipase A2 2.